Reading from the N-terminus, the 172-residue chain is uncharacterized protein (172 aa).

Positions 1-28 are enriched in low complexity; it reads MAAAGVTAKAGGGTSAAAASLIRARSPA. Residues 1 to 172 form a disordered region; the sequence is MAAAGVTAKA…GGRRSGRDAG (172 aa). Basic residues predominate over residues 58–68; that stretch reads PRRRSRARRGH. Positions 80–100 are enriched in gly residues; sequence TVGGEGQASQIGGGGGGGGGR. Residues 129-138 show a composition bias toward low complexity; the sequence is PGLASSPGVA. Over residues 139–165 the composition is skewed to gly residues; sequence PAGGSGGLWSGAGLCSGLGARGFPGGR.

This is an uncharacterized protein from Homo sapiens (Human).